The following is a 276-amino-acid chain: Large ribosomal subunit protein uL2 (276 aa).

2 disordered regions span residues 26-45 (RSTP…GRNC) and 224-276 (AMNP…RGQK). A compositionally biased stretch (basic residues) spans 259–276 (RDKKKASSKLIIKRRGQK).

It belongs to the universal ribosomal protein uL2 family. As to quaternary structure, part of the 50S ribosomal subunit. Forms a bridge to the 30S subunit in the 70S ribosome.

Its function is as follows. One of the primary rRNA binding proteins. Required for association of the 30S and 50S subunits to form the 70S ribosome, for tRNA binding and peptide bond formation. It has been suggested to have peptidyltransferase activity; this is somewhat controversial. Makes several contacts with the 16S rRNA in the 70S ribosome. The chain is Large ribosomal subunit protein uL2 from Oleidesulfovibrio alaskensis (strain ATCC BAA-1058 / DSM 17464 / G20) (Desulfovibrio alaskensis).